The sequence spans 183 residues: V-type ATP synthase subunit E (183 aa).

It belongs to the V-ATPase E subunit family.

Produces ATP from ADP in the presence of a proton gradient across the membrane. The chain is V-type ATP synthase subunit E from Fusobacterium nucleatum subsp. nucleatum (strain ATCC 25586 / DSM 15643 / BCRC 10681 / CIP 101130 / JCM 8532 / KCTC 2640 / LMG 13131 / VPI 4355).